The sequence spans 488 residues: DNA polymerase processivity factor (488 aa).

Disordered regions lie at residues 1–26 (MTDS…GQPE), 331–453 (SPSA…RSGS), and 469–488 (PGAF…FGFP). Residues 331 to 344 (SPSAGSSASRASGS) are compositionally biased toward low complexity. The segment covering 345–355 (EPTDSQDSASD) has biased composition (polar residues). A compositionally biased stretch (low complexity) spans 368–379 (AARAGEAGALHA). A compositionally biased stretch (polar residues) spans 383–393 (PSSTTRVTPTT). The Bipartite nuclear localization signal motif lies at 394 to 413 (KRGRSGGEDARADTALKKPK). A compositionally biased stretch (basic and acidic residues) spans 398-409 (SGGEDARADTAL). The span at 437–453 (ADGTAARPAAPDARSGS) shows a compositional bias: low complexity.

It belongs to the herpesviridae DNA polymerase processivity factor family. As to quaternary structure, interacts with the DNA polymerase catalytic subunit UL30. Interacts with the origin-binding protein.

Its subcellular location is the host nucleus. Functionally, plays an essential role in viral DNA replication by acting as the polymerase accessory subunit. Associates with the viral polymerase to increase its processivity and forms high-affinity direct interactions with DNA. Facilitates the origin-binding protein UL9 loading onto DNA thus increasing its ability to assemble into a functional complex capable of unwinding duplex DNA. The protein is DNA polymerase processivity factor of Homo sapiens (Human).